The chain runs to 201 residues: UPF0098 protein MT1961 (201 aa).

Positions 125–146 are disordered; it reads TADGETPGGGISLPNSSGQPAY.

Belongs to the UPF0098 family.

This is UPF0098 protein MT1961 from Mycobacterium tuberculosis (strain CDC 1551 / Oshkosh).